The primary structure comprises 1101 residues: Helicase POLQ-like (1101 aa).

The segment at 212–261 (DLGDHSMKERDWKSSSHNTVNEELPHNCIEQPQQNDESSSKVRTSSDMNR) is disordered. A compositionally biased stretch (basic and acidic residues) spans 213-225 (LGDHSMKERDWKS). The segment covering 241–258 (EQPQQNDESSSKVRTSSD) has biased composition (polar residues). The Helicase ATP-binding domain occupies 346-518 (LNSVQERKNL…FLQAEYYTSQ (173 aa)). Residue 359 to 366 (LPTSGGKT) participates in ATP binding. The DEAH box motif lies at 463–466 (DELH). In terms of domain architecture, Helicase C-terminal spans 566 to 758 (HLVALVTEVI…EFTKGIQTLF (193 aa)).

The protein belongs to the helicase family. SKI2 subfamily. Homodimer. Interacts with POLN. Interacts with RAD51B and RAD51C; promoting association with the BCDX2 complex. Interacts with the replication protein A (RPA/RP-A) complex. Interacts with RAD51; stimulating HELQ DNA helicase activity and ability to unwing DNA.

The protein resides in the nucleus. It localises to the chromosome. The catalysed reaction is Couples ATP hydrolysis with the unwinding of duplex DNA by translocating in the 3'-5' direction.. The enzyme catalyses ATP + H2O = ADP + phosphate + H(+). With respect to regulation, ATPase activity is strongly stimulated by single-stranded DNA. Presence of ATP and Mg cofactor are required for helicase activity allowing to unwind duplex oligonucleotides up to 60-70-mer. This helicase activity is stimulated by replication protein A (RPA/RP-A) complex that binds to unwound regions and inhibits re-annealing. Functionally, single-stranded 3'-5' DNA helicase that plays a key role in homology-driven double-strand break (DSB) repair. Involved in different DSB repair mechanisms that are guided by annealing of extensive stretches of complementary bases at break ends, such as microhomology-mediated end-joining (MMEJ), single-strand annealing (SSA) or synthesis-dependent strand annealing (SDSA). Possesses both DNA unwinding and annealing activities. Forms a complex with RAD51, stimulating HELQ DNA helicase activity and ability to unwing DNA. Efficiently unwinds substrates containing 3' overhangs or a D-loop. In contrast, interaction with the replication protein A (RPA/RP-A) complex inhibits DNA unwinding by HELQ but strongly stimulates DNA strand annealing. Triggers displacement of RPA from single-stranded DNA to facilitate annealing of complementary sequences. This Homo sapiens (Human) protein is Helicase POLQ-like.